Reading from the N-terminus, the 503-residue chain is Medium/long-chain-fatty-acid--CoA ligase FadD17 (503 aa).

Belongs to the ATP-dependent AMP-binding enzyme family.

It carries out the reaction a medium-chain fatty acid + ATP + CoA = a medium-chain fatty acyl-CoA + AMP + diphosphate. The enzyme catalyses a long-chain fatty acid + ATP + CoA = a long-chain fatty acyl-CoA + AMP + diphosphate. Its pathway is lipid metabolism; fatty acid biosynthesis. Catalyzes the activation of medium/long-chain fatty acids as acyl-coenzyme A (acyl-CoA), which are then transferred to the multifunctional polyketide synthase (PKS) type III for further chain extension. This chain is Medium/long-chain-fatty-acid--CoA ligase FadD17 (fadD17), found in Mycobacterium marinum (strain ATCC BAA-535 / M).